The sequence spans 268 residues: 4-hydroxy-tetrahydrodipicolinate reductase (268 aa).

Residues 8-13 and Glu34 contribute to the NAD(+) site; that span reads GAAGRM. Arg35 contributes to the NADP(+) binding site. Residues 96–98 and 120–123 each bind NAD(+); these read GST and SPNM. Catalysis depends on His153, which acts as the Proton donor/acceptor. His154 lines the (S)-2,3,4,5-tetrahydrodipicolinate pocket. Lys157 (proton donor) is an active-site residue. Residue 163–164 coordinates (S)-2,3,4,5-tetrahydrodipicolinate; sequence GT.

It belongs to the DapB family.

It localises to the cytoplasm. The enzyme catalyses (S)-2,3,4,5-tetrahydrodipicolinate + NAD(+) + H2O = (2S,4S)-4-hydroxy-2,3,4,5-tetrahydrodipicolinate + NADH + H(+). It catalyses the reaction (S)-2,3,4,5-tetrahydrodipicolinate + NADP(+) + H2O = (2S,4S)-4-hydroxy-2,3,4,5-tetrahydrodipicolinate + NADPH + H(+). The protein operates within amino-acid biosynthesis; L-lysine biosynthesis via DAP pathway; (S)-tetrahydrodipicolinate from L-aspartate: step 4/4. Catalyzes the conversion of 4-hydroxy-tetrahydrodipicolinate (HTPA) to tetrahydrodipicolinate. This chain is 4-hydroxy-tetrahydrodipicolinate reductase, found in Anaeromyxobacter sp. (strain Fw109-5).